The following is a 307-amino-acid chain: Voltage-dependent anion channel-forming protein sll1024 (307 aa).

4 consecutive transmembrane segments (helical) span residues 26–46 (VIPA…GVTL), 54–74 (FSIP…LLVF), 226–246 (LIFL…HWAT), and 247–267 (AFVV…GVEI).

Belongs to the anion channel-forming bestrophin (TC 1.A.46) family.

The protein resides in the cell membrane. The sequence is that of Voltage-dependent anion channel-forming protein sll1024 from Synechocystis sp. (strain ATCC 27184 / PCC 6803 / Kazusa).